The chain runs to 365 residues: Putative clathrin assembly protein At4g40080 (365 aa).

An ENTH domain is found at Asn-29–Ile-167.

Its subcellular location is the membrane. The protein localises to the clathrin-coated pit. It localises to the golgi apparatus. It is found in the cytoplasmic vesicle. The protein resides in the clathrin-coated vesicle. This is Putative clathrin assembly protein At4g40080 from Arabidopsis thaliana (Mouse-ear cress).